Consider the following 401-residue polypeptide: Exodeoxyribonuclease 7 large subunit (401 aa).

This sequence belongs to the XseA family. As to quaternary structure, heterooligomer composed of large and small subunits.

The protein resides in the cytoplasm. The catalysed reaction is Exonucleolytic cleavage in either 5'- to 3'- or 3'- to 5'-direction to yield nucleoside 5'-phosphates.. Its function is as follows. Bidirectionally degrades single-stranded DNA into large acid-insoluble oligonucleotides, which are then degraded further into small acid-soluble oligonucleotides. The polypeptide is Exodeoxyribonuclease 7 large subunit (Clostridium botulinum (strain Hall / ATCC 3502 / NCTC 13319 / Type A)).